The chain runs to 379 residues: 2-dehydropantoate 2-reductase (379 aa).

NADP(+) contacts are provided by residues 13–18 (GLGAMG) and asparagine 119. Asparagine 119 provides a ligand contact to substrate. Lysine 224 serves as the catalytic Proton donor. The substrate site is built by asparagine 228, asparagine 232, and serine 316. Position 328 (glutamate 328) interacts with NADP(+).

It belongs to the ketopantoate reductase family.

The enzyme catalyses (R)-pantoate + NADP(+) = 2-dehydropantoate + NADPH + H(+). Its pathway is cofactor biosynthesis; (R)-pantothenate biosynthesis; (R)-pantoate from 3-methyl-2-oxobutanoate: step 2/2. Catalyzes the NADPH-dependent reduction of ketopantoate into pantoic acid. The chain is 2-dehydropantoate 2-reductase (PAN5) from Saccharomyces cerevisiae (strain ATCC 204508 / S288c) (Baker's yeast).